The following is a 221-amino-acid chain: Lactate racemization regulatory protein (221 aa).

In terms of domain architecture, HTH crp-type spans 139–213 (NGKKGAICAF…NHKFIIQDVS (75 aa)). The segment at residues 172–192 (NDDIAGFCGISSRSSVNRMLK) is a DNA-binding region (H-T-H motif).

As to quaternary structure, multimerizes on DNA. Multimerization is required for transcription activation.

Its activity is regulated as follows. L-lactate acts as a positive effector on the binding and multimerization of LarR on DNA, while D-lactate antagonizes the positive effect of L-lactate. Functionally, positive transcriptional regulator that is absolutely required for the expression of lactate racemase (Lar) activity. Controls Lar expression by sensing the L-/D-lactate ration. Binds to a 16-bp palindromic sequence (Lar box motif) that is present in the larR-larA intergenic region, allowing transcription of the larABCDE operon. The sequence is that of Lactate racemization regulatory protein from Lactiplantibacillus plantarum (strain ATCC BAA-793 / NCIMB 8826 / WCFS1) (Lactobacillus plantarum).